We begin with the raw amino-acid sequence, 105 residues long: N(4)-acetylcytidine amidohydrolase (105 aa).

An ASCH domain is found at 8–93 (TFFEFLTPLV…ALIQEIYPNI (86 aa)). K22 serves as the catalytic Proton acceptor. Catalysis depends on T25, which acts as the Nucleophile. The active-site Proton donor is the E75.

The protein belongs to the N(4)-acetylcytidine amidohydrolase family.

It carries out the reaction N(4)-acetylcytidine + H2O = cytidine + acetate + H(+). The catalysed reaction is N(4)-acetyl-2'-deoxycytidine + H2O = 2'-deoxycytidine + acetate + H(+). The enzyme catalyses N(4)-acetylcytosine + H2O = cytosine + acetate + H(+). Its function is as follows. Catalyzes the hydrolysis of N(4)-acetylcytidine (ac4C). This is N(4)-acetylcytidine amidohydrolase from Vibrio cholerae serotype O1 (strain ATCC 39315 / El Tor Inaba N16961).